Reading from the N-terminus, the 134-residue chain is uncharacterized protein (134 aa).

The signal sequence occupies residues 1-16 (MAKAVALLLAAIAASA).

This is an uncharacterized protein from Oryza sativa subsp. indica (Rice).